A 180-amino-acid polypeptide reads, in one-letter code: Large ribosomal subunit protein uL6 (180 aa).

The protein belongs to the universal ribosomal protein uL6 family. Part of the 50S ribosomal subunit.

In terms of biological role, this protein binds to the 23S rRNA, and is important in its secondary structure. It is located near the subunit interface in the base of the L7/L12 stalk, and near the tRNA binding site of the peptidyltransferase center. In Picrophilus torridus (strain ATCC 700027 / DSM 9790 / JCM 10055 / NBRC 100828 / KAW 2/3), this protein is Large ribosomal subunit protein uL6.